We begin with the raw amino-acid sequence, 188 residues long: Movement protein (188 aa).

It belongs to the tombusvirus/aureusvirus movement protein p22 family. As to quaternary structure, interacts with host protein HFI22. Phosphorylated.

Its subcellular location is the host membrane. In terms of biological role, transports viral genome to neighboring plant cells directly through plasmosdesmata, without any budding. The movement protein allows efficient cell to cell propagation, by bypassing the host cell wall barrier. The protein is Movement protein of Capsicum annuum (Capsicum pepper).